We begin with the raw amino-acid sequence, 501 residues long: AKT kinase-transforming protein (501 aa).

In terms of domain architecture, PH spans 26–129 (AIVKEGWLHK…WATAIQTVAD (104 aa)). Positions 135–158 (EEETMDFRSGSPSDNSGAEEMEVS) are disordered. The Protein kinase domain maps to 171–429 (FEYLKLLGKG…AKEIMQHRFF (259 aa)). ATP-binding positions include 177–185 (LGKGTFGKV) and lysine 200. The Proton acceptor role is filled by aspartate 295. Tyrosine 347 carries the post-translational modification Phosphotyrosine. The AGC-kinase C-terminal domain maps to 430 to 501 (ANIVWQDVYE…QFSYSASGTA (72 aa)). Positions 471 to 501 (TPPDQDDSMECVDSERRPHFPQFSYSASGTA) are disordered.

The protein belongs to the protein kinase superfamily. AGC Ser/Thr protein kinase family. RAC subfamily. In terms of assembly, interacts with mouse THEM4. Post-translationally, autophosphorylated on threonine and serine residues.

It carries out the reaction L-seryl-[protein] + ATP = O-phospho-L-seryl-[protein] + ADP + H(+). The catalysed reaction is L-threonyl-[protein] + ATP = O-phospho-L-threonyl-[protein] + ADP + H(+). The polypeptide is AKT kinase-transforming protein (V-AKT) (Mus musculus (Mouse)).